Here is a 216-residue protein sequence, read N- to C-terminus: Thiamine-phosphate synthase (216 aa).

Residues 41–45 (QLREK) and Asp-77 each bind 4-amino-2-methyl-5-(diphosphooxymethyl)pyrimidine. The Mg(2+) site is built by Asp-78 and Asp-97. 4-amino-2-methyl-5-(diphosphooxymethyl)pyrimidine is bound at residue Ser-116. 143 to 145 (TTS) is a 2-[(2R,5Z)-2-carboxy-4-methylthiazol-5(2H)-ylidene]ethyl phosphate binding site. Residue Lys-146 participates in 4-amino-2-methyl-5-(diphosphooxymethyl)pyrimidine binding. 2-[(2R,5Z)-2-carboxy-4-methylthiazol-5(2H)-ylidene]ethyl phosphate is bound by residues Gly-174 and 194 to 195 (IS).

The protein belongs to the thiamine-phosphate synthase family. Mg(2+) serves as cofactor.

It catalyses the reaction 2-[(2R,5Z)-2-carboxy-4-methylthiazol-5(2H)-ylidene]ethyl phosphate + 4-amino-2-methyl-5-(diphosphooxymethyl)pyrimidine + 2 H(+) = thiamine phosphate + CO2 + diphosphate. The enzyme catalyses 2-(2-carboxy-4-methylthiazol-5-yl)ethyl phosphate + 4-amino-2-methyl-5-(diphosphooxymethyl)pyrimidine + 2 H(+) = thiamine phosphate + CO2 + diphosphate. The catalysed reaction is 4-methyl-5-(2-phosphooxyethyl)-thiazole + 4-amino-2-methyl-5-(diphosphooxymethyl)pyrimidine + H(+) = thiamine phosphate + diphosphate. The protein operates within cofactor biosynthesis; thiamine diphosphate biosynthesis; thiamine phosphate from 4-amino-2-methyl-5-diphosphomethylpyrimidine and 4-methyl-5-(2-phosphoethyl)-thiazole: step 1/1. Functionally, condenses 4-methyl-5-(beta-hydroxyethyl)thiazole monophosphate (THZ-P) and 2-methyl-4-amino-5-hydroxymethyl pyrimidine pyrophosphate (HMP-PP) to form thiamine monophosphate (TMP). This is Thiamine-phosphate synthase from Pediococcus pentosaceus (strain ATCC 25745 / CCUG 21536 / LMG 10740 / 183-1w).